The following is a 410-amino-acid chain: BRCA1-A complex subunit Abraxas 1 (410 aa).

Residues 7-160 (TAVLSGFVLG…HALYKPQKGL (154 aa)) enclose the MPN domain. Position 48 is a phosphoserine (Ser48). Positions 208–261 (SLKEVQKINEMYTSLQDELKSICEKVEHSERAVEKLLNDVNRLKGEIKKRKQAQ) form a coiled coil. The interval 354 to 410 (DGWQFKKSRLGGIQNRPSKTDTNSSNQEQASTVSSPETDEEIERMKGSGEYPQSPTF) is disordered. A compositionally biased stretch (polar residues) spans 368–389 (NRPSKTDTNSSNQEQASTVSSP). 2 positions are modified to phosphoserine: Ser387 and Ser388. Thr391 carries the post-translational modification Phosphothreonine. Residue Ser407 is modified to Phosphoserine. A pSXXF motif motif is present at residues 407–410 (SPTF).

This sequence belongs to the FAM175 family. Abraxas subfamily. Component of the ARISC complex, at least composed of UIMC1/RAP80, ABRAXAS1, BRCC3/BRCC36, BABAM2 and BABAM1/NBA1. Component of the BRCA1-A complex, at least composed of the BRCA1, BARD1, UIMC1/RAP80, ABRAXAS1, BRCC3/BRCC36, BABAM2 and BABAM1/NBA1. In the complex, interacts directly with UIMC1/RAP80, BRCC3/BRCC36 and BABAM2. Homodimer. Interacts directly (when phosphorylated at Ser-407) with BRCA1. The phosphorylated homodimer can interact directly with two BRCA1 chains, giving rise to a heterotetramer. Binds polyubiquitin. Phosphorylation of Ser-407 of the pSXXF motif by ATM or ATR constitutes a specific recognition motif for the BRCT domain of BRCA1.

It localises to the nucleus. Involved in DNA damage response and double-strand break (DSB) repair. Component of the BRCA1-A complex, acting as a central scaffold protein that assembles the various components of the complex and mediates the recruitment of BRCA1. The BRCA1-A complex specifically recognizes 'Lys-63'-linked ubiquitinated histones H2A and H2AX at DNA lesion sites, leading to target the BRCA1-BARD1 heterodimer to sites of DNA damage at DSBs. This complex also possesses deubiquitinase activity that specifically removes 'Lys-63'-linked ubiquitin on histones H2A and H2AX. This chain is BRCA1-A complex subunit Abraxas 1, found in Bos taurus (Bovine).